Reading from the N-terminus, the 1461-residue chain is Phospholipid-transporting ATPase VB (1461 aa).

Residues 1 to 82 (MALSVDSSWH…TTKYTLFTFL (82 aa)) are Cytoplasmic-facing. A helical membrane pass occupies residues 83-104 (PRNLFEQFHRWANLYFLFLVIL). The Exoplasmic loop segment spans residues 105-110 (NWMPSM). The chain crosses the membrane as a helical span at residues 111–132 (EVFHREITMLPLAIVLFVIMIK). Topologically, residues 133-316 (DGMEDFKRHR…SKIERRMNID (184 aa)) are cytoplasmic. A helical transmembrane segment spans residues 317-338 (IFFCIGILILMCLIGAVGHSIW). Residues 339–368 (NGTFEEHPPFDVPDANGSFLPSALGGFYMF) are Exoplasmic loop-facing. The chain crosses the membrane as a helical span at residues 369–390 (LTMIILLQVLIPISLYVSIELV). Residues 391–1111 (KLGQVFFLSN…GHWCYSRLAR (721 aa)) lie on the Cytoplasmic side of the membrane. The active-site 4-aspartylphosphate intermediate is D433. The ATP site is built by D433, K434, and T435. Position 433 (D433) interacts with Mg(2+). T435 serves as a coordination point for Mg(2+). 2 stretches are compositionally biased toward polar residues: residues 496-511 (MRSQ…SQSA) and 530-539 (SQPPVAFSSS). Disordered stretches follow at residues 496–541 (MRSQ…SSIE) and 640–687 (TAPS…MWDQ). ATP-binding residues include E724, F766, K790, R835, T915, G916, D917, R1029, and K1035. D1055 lines the Mg(2+) pocket. ATP-binding residues include N1058 and D1059. A Mg(2+)-binding site is contributed by D1059. A helical membrane pass occupies residues 1112 to 1132 (MVVYYLYKNVCYVNLLFWYQF). Over 1133–1144 (FCGFSSSTMIDY) the chain is Exoplasmic loop. A helical transmembrane segment spans residues 1145–1164 (WQMIFFNLFFTSLPPLVFGV). The Cytoplasmic portion of the chain corresponds to 1165–1194 (LDKDISAETLLALPELYKSGQNSECYNLST). The helical transmembrane segment at 1195–1216 (FWISMVDAFYQSLICFFIPYLA) threads the bilayer. The Exoplasmic loop portion of the chain corresponds to 1217–1223 (YKGSDID). Residues 1224 to 1246 (VFTFGTPINTISLTTILLHQAME) form a helical membrane-spanning segment. Residues 1247–1252 (MKTWTI) lie on the Cytoplasmic side of the membrane. A helical membrane pass occupies residues 1253–1273 (FHGVVLLGSFLMYFLVSLLYN). Over 1274–1291 (ATCVICNSPTNPYWVMEG) the chain is Exoplasmic loop. A helical transmembrane segment spans residues 1292–1316 (QLSNPTFYLVCFLTPVVALLPRYFF). The Cytoplasmic segment spans residues 1317–1461 (LSLQGTCGKS…HRRSQSSLTI (145 aa)). The tract at residues 1346 to 1397 (IQSWRSRQRPAPVPEVARPTHHPVSSITGQDFSASTPKSSNPPKRKHVEESV) is disordered. Residues 1368-1387 (PVSSITGQDFSASTPKSSNP) show a composition bias toward polar residues.

Belongs to the cation transport ATPase (P-type) (TC 3.A.3) family. Type IV subfamily. In terms of assembly, component of a P4-ATPase flippase complex which consists of a catalytic alpha subunit ATP10B and an accessory beta subunit TMEM30A. Requires Mg(2+) as cofactor. In terms of processing, autophosphorylated at the conserved aspartate of the P-type ATPase signature sequence. In terms of tissue distribution, expressed in predominantly in brain structures including medulla oblongata, substantia nigra and basal ganglia. Expressed in the gastrointestinal system with highest levels in the small intestine and colon. Also expressed at low levels in testis and thymus.

It is found in the late endosome membrane. It localises to the lysosome membrane. Its subcellular location is the endoplasmic reticulum membrane. It carries out the reaction ATP + H2O + phospholipidSide 1 = ADP + phosphate + phospholipidSide 2.. It catalyses the reaction a beta-D-glucosyl-(1&lt;-&gt;1')-N-acylsphing-4-enine(out) + ATP + H2O = a beta-D-glucosyl-(1&lt;-&gt;1')-N-acylsphing-4-enine(in) + ADP + phosphate + H(+). Functionally, catalytic component of a P4-ATPase flippase complex, which catalyzes the hydrolysis of ATP coupled to the transport of glucosylceramide (GlcCer) from the outer to the inner leaflet of lysosome membranes. Plays an important role in the maintenance of lysosome membrane integrity and function in cortical neurons. This is Phospholipid-transporting ATPase VB from Homo sapiens (Human).